Reading from the N-terminus, the 488-residue chain is Aerolysin (488 aa).

Positions 1–24 are cleaved as a signal peptide; the sequence is MMNRIITANLAFLASSLMLAQVQA. 2 disulfide bridges follow: Cys43-Cys99 and Cys183-Cys188. Residues 69 to 85 form an interaction with host N-linked glycan region; it reads WQITGLADRWVIMGPGY. The interval 256–288 is part of the transmembrane beta-barrel after proteolytic activation of the toxin and insertion into the host membrane; it reads YSLSEKVTTKNKFQWPLVGETELAIEIAASQSW. The segment at 346 to 355 is interaction with glycans from host GPI-anchor; the sequence is RWGGNAWYTH. The propeptide occupies 444 to 488; the sequence is TRSAKAAQLRSASAEEVALTSVDLDSEALANEGFGNVSLTIVPVQ.

Belongs to the aerolysin family. Homodimer in solution; homoheptamer in the host membrane. After binding to GPI-anchored proteins in target membranes and proteolytic removal of the C-terminal propeptide, the protein assembles into a heptameric pre-pore complex. A further conformation change leads to insertion into the host membrane. In terms of processing, proteolytic cleavage and subsequent release of the propeptide trigger a major conformation change, leading to the formation of a heptameric pre-pore that then inserts into the host membrane.

Its subcellular location is the secreted. The protein resides in the host cell membrane. Functionally, secreted, cytolytic toxin that forms pores in host membranes after proteolytic removal of a C-terminal propeptide, leading to destruction of the membrane permeability barrier and cell death. The pores are formed by transmembrane beta-strands and are approximately 3 nm in diameter. The protein is Aerolysin (asa1) of Aeromonas sobria.